We begin with the raw amino-acid sequence, 136 residues long: Riboflavin kinase (136 aa).

15–20 provides a ligand contact to CDP; the sequence is GLGEGR. Mg(2+) is bound by residues Thr-44 and Asn-46. FMN contacts are provided by Thr-103 and Glu-111. 116–119 contributes to the CDP binding site; it reads YYLR.

The protein belongs to the archaeal riboflavin kinase family. It depends on Mg(2+) as a cofactor.

The catalysed reaction is riboflavin + CTP = CDP + FMN + H(+). It functions in the pathway cofactor biosynthesis; FMN biosynthesis; FMN from riboflavin (CTP route): step 1/1. Catalyzes the CTP-dependent phosphorylation of riboflavin (vitamin B2) to form flavin mononucleotide (FMN). The chain is Riboflavin kinase from Sulfurisphaera tokodaii (strain DSM 16993 / JCM 10545 / NBRC 100140 / 7) (Sulfolobus tokodaii).